Consider the following 424-residue polypeptide: SWI/SNF and RSC complexes subunit arp42 (424 aa).

It belongs to the actin family. As to quaternary structure, component of the RSC complex composed of at least arp9, arp42, rsc1, rsc4, rsc7, rsc9, rsc58, sfh1, snf21, ssr1, ssr2, ssr3 and ssr4. The complex interacts with histone and histone variant components of centromeric chromatin. Component of the SWI/SNF global transcription activator complex composed of at least arp9, arp42, snf5, snf22, snf30, sbf59, sol1, ssr1, ssr2, ssr3, ssr4 and tfg3.

It localises to the cytoplasm. The protein localises to the nucleus. Component of the chromatin structure remodeling complex (RSC), which is involved in transcription regulation and nucleosome positioning. Controls particularly membrane and organelle development genes. Part of the SWI/SNF complex, an ATP-dependent chromatin remodeling complex, required for the positive and negative regulation of gene expression of a large number of genes. It changes chromatin structure by altering DNA-histone contacts within a nucleosome, leading eventually to a change in nucleosome position, thus facilitating or repressing binding of gene-specific transcription factors. This is SWI/SNF and RSC complexes subunit arp42 (arp42) from Schizosaccharomyces pombe (strain 972 / ATCC 24843) (Fission yeast).